Here is a 166-residue protein sequence, read N- to C-terminus: Large ribosomal subunit protein uL11 (166 aa).

The protein belongs to the universal ribosomal protein uL11 family.

The chain is Large ribosomal subunit protein uL11 (rpl12) from Dictyostelium discoideum (Social amoeba).